Reading from the N-terminus, the 1077-residue chain is Receptor-like protein 1 (1077 aa).

The N-terminal stretch at 1 to 38 (MRTDERRRWWVKPKKHITLVFITITMIIQFQMKGCVSC) is a signal peptide. The segment at 39–120 (VETERMGLLQ…SQTRSLNLSL (82 aa)) is N-cap. The Extracellular segment spans residues 39-1024 (VETERMGLLQ…NEEEGNVIDM (986 aa)). Residues Asn117, Asn131, and Asn139 are each glycosylated (N-linked (GlcNAc...) asparagine). LRR repeat units follow at residues 124-147 (FPQL…FLGF), 153-176 (LDKL…FLNA), 177-201 (ATSI…ELSN), 202-225 (MTNL…GLTD), 227-250 (RDLE…SLST), 251-274 (AKLK…GLES), 275-299 (LQEL…VLKD), 300-324 (LKML…GLEI), 326-348 (TSLQ…YLGI), 351-376 (LMKL…NLTH), 378-397 (RTLD…FVSG), and 399-424 (PSVL…LVNQ). A glycan (N-linked (GlcNAc...) asparagine) is linked at Asn201. Asn240 carries an N-linked (GlcNAc...) asparagine glycan. Residue Asn289 is glycosylated (N-linked (GlcNAc...) asparagine). N-linked (GlcNAc...) asparagine glycans are attached at residues Asn373, Asn390, and Asn423. The stretch at 425–449 (TRLTVFKLSSKVGVIQVQTESSWAP) is one LRR 13; degenerate repeat. 19 LRR repeats span residues 450–473 (LFQL…FLVH), 474–498 (QRDL…LVKN), 499–522 (NTRL…ILVH), 524–545 (LQVL…IGMV), 546–570 (FPNL…IGEM), 572–594 (SLQV…FLSG), 595–621 (CYSL…NLTG), 623–643 (VGLF…LLKS), 644–666 (KNLT…WIGR), 667–694 (ISRL…PWVE), 696–713 (MDIS…NVNF), 714–737 (PSLR…LFKA), 739–761 (GLEV…IDQT), 762–785 (SKLR…ICQL), 786–808 (SEVG…CFSK), 877–901 (LRYM…IGDL), 902–925 (QNIR…ISKL), 927–949 (GLES…LADL), and 951–970 (SLGY…PFKG). N-linked (GlcNAc...) asparagine glycosylation is found at Asn460 and Asn498. Asn553 is a glycosylation site (N-linked (GlcNAc...) asparagine). Residues Asn618, Asn631, and Asn645 are each glycosylated (N-linked (GlcNAc...) asparagine). Asn749 and Asn771 each carry an N-linked (GlcNAc...) asparagine glycan. An N-linked (GlcNAc...) asparagine glycan is attached at Asn908. N-linked (GlcNAc...) asparagine glycosylation is found at Asn956 and Asn961. The interval 971–1024 (HLVTFDERSYIGNAHLCGLPTNKNCISQRVPEPPSVSTHAKEEENEEEGNVIDM) is C-cap/acidic domain. Residues 1025–1045 (VWFYWTCAAVYISTSLALFAF) traverse the membrane as a helical segment. Over 1046 to 1077 (LYIDSRWSREWFYRVDLCVHHILQFKRSSVCN) the chain is Cytoplasmic.

This sequence belongs to the RLP family.

Its subcellular location is the cell membrane. Its function is as follows. Involved in plant defense. Confers resistance to the bacterial pathogen Xanthomonas through recognition of the microbe-associated molecular pattern (MAMP) eMax. Functionality seems to depend on the presence of the receptor kinase SOBIR1 as an adapter protein. In Arabidopsis thaliana (Mouse-ear cress), this protein is Receptor-like protein 1.